The primary structure comprises 84 residues: Small ribosomal subunit protein bS20 (84 aa).

It belongs to the bacterial ribosomal protein bS20 family.

Binds directly to 16S ribosomal RNA. The polypeptide is Small ribosomal subunit protein bS20 (Bacteroides thetaiotaomicron (strain ATCC 29148 / DSM 2079 / JCM 5827 / CCUG 10774 / NCTC 10582 / VPI-5482 / E50)).